A 309-amino-acid polypeptide reads, in one-letter code: F-box/LRR-repeat protein At3g48880 (309 aa).

Positions 10-57 (LRRWEELDTDILVRIFQKFSVFELTSGLAHVCRGWRAACCDPILWKTV) constitute an F-box domain. LRR repeat units follow at residues 77–107 (VERRSDEALTRILKLSMNLSGGSTRTLIFHF), 108–133 (NLFLSDDQLTYTAERCPGLRRVVLPA), 159–184 (SIANPPYLLTEIAKNCKNFKELKIMG), and 208–233 (CSAIKREALMKILDGLPSLEVLNISH).

This chain is F-box/LRR-repeat protein At3g48880, found in Arabidopsis thaliana (Mouse-ear cress).